Here is a 124-residue protein sequence, read N- to C-terminus: Large ribosomal subunit protein bL12 (124 aa).

Residues 94–124 are disordered; the sequence is APKPVKESVPKAAAEEAKKKLEEAGAKAEIK.

The protein belongs to the bacterial ribosomal protein bL12 family. In terms of assembly, homodimer. Part of the ribosomal stalk of the 50S ribosomal subunit. Forms a multimeric L10(L12)X complex, where L10 forms an elongated spine to which 2 to 4 L12 dimers bind in a sequential fashion. Binds GTP-bound translation factors.

In terms of biological role, forms part of the ribosomal stalk which helps the ribosome interact with GTP-bound translation factors. Is thus essential for accurate translation. The chain is Large ribosomal subunit protein bL12 from Paraburkholderia phytofirmans (strain DSM 17436 / LMG 22146 / PsJN) (Burkholderia phytofirmans).